A 187-amino-acid chain; its full sequence is Ubiquinone biosynthesis protein COQ4 homolog, mitochondrial (187 aa).

Zn(2+) contacts are provided by His-77, Asp-78, His-81, and Glu-93.

The protein belongs to the COQ4 family. In terms of assembly, component of a multi-subunit COQ enzyme complex. Zn(2+) serves as cofactor.

The protein resides in the mitochondrion inner membrane. The enzyme catalyses a 4-hydroxy-3-methoxy-5-(all-trans-polyprenyl)benzoate + H(+) = a 2-methoxy-6-(all-trans-polyprenyl)phenol + CO2. It participates in cofactor biosynthesis; ubiquinone biosynthesis. Functionally, lyase that catalyzes the C1-decarboxylation of 4-hydroxy-3-methoxy-5-(all-trans-polyprenyl)benzoic acid into 2-methoxy-6-(all-trans-polyprenyl)phenol during ubiquinone biosynthesis. The protein is Ubiquinone biosynthesis protein COQ4 homolog, mitochondrial of Leishmania braziliensis.